Reading from the N-terminus, the 245-residue chain is DNA polymerase sliding clamp (245 aa).

Belongs to the PCNA family. Homotrimer. The subunits circularize to form a toroid; DNA passes through its center. Replication factor C (RFC) is required to load the toroid on the DNA.

In terms of biological role, sliding clamp subunit that acts as a moving platform for DNA processing. Responsible for tethering the catalytic subunit of DNA polymerase and other proteins to DNA during high-speed replication. The sequence is that of DNA polymerase sliding clamp from Methanosarcina mazei (strain ATCC BAA-159 / DSM 3647 / Goe1 / Go1 / JCM 11833 / OCM 88) (Methanosarcina frisia).